The following is a 95-amino-acid chain: Aspartyl/glutamyl-tRNA(Asn/Gln) amidotransferase subunit C (95 aa).

It belongs to the GatC family. As to quaternary structure, heterotrimer of A, B and C subunits.

It carries out the reaction L-glutamyl-tRNA(Gln) + L-glutamine + ATP + H2O = L-glutaminyl-tRNA(Gln) + L-glutamate + ADP + phosphate + H(+). It catalyses the reaction L-aspartyl-tRNA(Asn) + L-glutamine + ATP + H2O = L-asparaginyl-tRNA(Asn) + L-glutamate + ADP + phosphate + 2 H(+). In terms of biological role, allows the formation of correctly charged Asn-tRNA(Asn) or Gln-tRNA(Gln) through the transamidation of misacylated Asp-tRNA(Asn) or Glu-tRNA(Gln) in organisms which lack either or both of asparaginyl-tRNA or glutaminyl-tRNA synthetases. The reaction takes place in the presence of glutamine and ATP through an activated phospho-Asp-tRNA(Asn) or phospho-Glu-tRNA(Gln). The protein is Aspartyl/glutamyl-tRNA(Asn/Gln) amidotransferase subunit C of Cereibacter sphaeroides (strain ATCC 17023 / DSM 158 / JCM 6121 / CCUG 31486 / LMG 2827 / NBRC 12203 / NCIMB 8253 / ATH 2.4.1.) (Rhodobacter sphaeroides).